Consider the following 57-residue polypeptide: MYDTWFVLTAVVLFVLVLIGNVHGYPPWAWSGFMGSKWYNSWGPWAWRGWDDDWFDD.

The N-terminal stretch at 1-24 (MYDTWFVLTAVVLFVLVLIGNVHG) is a signal peptide.

Prismatic layer of shell (at protein level).

It is found in the secreted. This is an uncharacterized protein from Margaritifera margaritifera (Freshwater pearl mussel).